A 309-amino-acid chain; its full sequence is Ribosomal RNA small subunit methyltransferase H (309 aa).

Residues 33–35, Asp53, Phe79, Asp100, and Gln107 each bind S-adenosyl-L-methionine; that span reads GGH.

It belongs to the methyltransferase superfamily. RsmH family.

Its subcellular location is the cytoplasm. It catalyses the reaction cytidine(1402) in 16S rRNA + S-adenosyl-L-methionine = N(4)-methylcytidine(1402) in 16S rRNA + S-adenosyl-L-homocysteine + H(+). Functionally, specifically methylates the N4 position of cytidine in position 1402 (C1402) of 16S rRNA. This Clostridium botulinum (strain Langeland / NCTC 10281 / Type F) protein is Ribosomal RNA small subunit methyltransferase H.